Consider the following 556-residue polypeptide: 2-succinyl-5-enolpyruvyl-6-hydroxy-3-cyclohexene-1-carboxylate synthase (556 aa).

Belongs to the TPP enzyme family. MenD subfamily. In terms of assembly, homodimer. It depends on Mg(2+) as a cofactor. Requires Mn(2+) as cofactor. Thiamine diphosphate is required as a cofactor.

The catalysed reaction is isochorismate + 2-oxoglutarate + H(+) = 5-enolpyruvoyl-6-hydroxy-2-succinyl-cyclohex-3-ene-1-carboxylate + CO2. The protein operates within quinol/quinone metabolism; 1,4-dihydroxy-2-naphthoate biosynthesis; 1,4-dihydroxy-2-naphthoate from chorismate: step 2/7. Its pathway is quinol/quinone metabolism; menaquinone biosynthesis. In terms of biological role, catalyzes the thiamine diphosphate-dependent decarboxylation of 2-oxoglutarate and the subsequent addition of the resulting succinic semialdehyde-thiamine pyrophosphate anion to isochorismate to yield 2-succinyl-5-enolpyruvyl-6-hydroxy-3-cyclohexene-1-carboxylate (SEPHCHC). This is 2-succinyl-5-enolpyruvyl-6-hydroxy-3-cyclohexene-1-carboxylate synthase from Salmonella typhi.